Here is a 644-residue protein sequence, read N- to C-terminus: Translation factor guf1, mitochondrial (644 aa).

Residues 1 to 31 constitute a mitochondrion transit peptide; that stretch reads MTLRRFSYTFQARILRGLQARPVFVLPSRSH. The 182-residue stretch at 51 to 232 folds into the tr-type G domain; sequence VNIRNWAIIS…AIIQRVPHPI (182 aa). GTP contacts are provided by residues 60–67, 125–129, and 179–182; these read SHIDHGKS, DTPGH, and NKID.

This sequence belongs to the TRAFAC class translation factor GTPase superfamily. Classic translation factor GTPase family. LepA subfamily.

The protein localises to the mitochondrion inner membrane. The enzyme catalyses GTP + H2O = GDP + phosphate + H(+). In terms of biological role, promotes mitochondrial protein synthesis. May act as a fidelity factor of the translation reaction, by catalyzing a one-codon backward translocation of tRNAs on improperly translocated ribosomes. Binds to mitochondrial ribosomes in a GTP-dependent manner. The polypeptide is Translation factor guf1, mitochondrial (guf1) (Schizosaccharomyces japonicus (strain yFS275 / FY16936) (Fission yeast)).